The primary structure comprises 710 residues: MNNSKLSVPGQYEDESSTIYVGNIDSRLSDEEIIKHFSKYGQVESIFRRLLDSFYPKEKAKPFKPPKNGVQYGFVKFVNAESIEEVLKDAKGMTLGQRKLTIKARVVNPAKLTDKKFKPNDTSITANVFNPSIQNNTDEENVKPGLKQSQIKEFIPNVEERNWETVRGINSRNPKPETTLTIPSLGLEDISMQVVPNAFASTLPLSILNLPAEVTPIDLYNHFKQAGVVKGTAVSQFLDQRGFRYGEVIMDSVESCQNAIEKLNNVPYKGSILEVSIKNKASSSVKSIPTTPTGESLWPFPSENANKTQINIENATCSKMTWIMGSPTKEKSQWGSVSTTGVSNQQNHPAAWNPDNKPQSIVHWDSLRESSPSIPNSPIDPSNLYVKNLDDTVITCKSQLEDLFSPFGSILSSMLACYPNSGISKGYGFVAFRQIEAAVRAKDTLNGMMVGKKRIFVCFAERKSDRIRRLQAFFANKPTSEQTAQQDNKALFVKPERSSTVTIRKPIESSTNKISENPTTLSSKVENKNEPKTGENKEPSQTNEYVNCKQENKELSGQLSGNLDIKKEAGKLSHDGEQGNLLKPLVFHANTKLNNRGSAKMGSTATNLKKIQDMLHNKKLSNAYFVPRARATTCTTLTYVTVEPSHFQDEDCNESTNMLSLVGYMDSYPEATSNIQKMNSYHIKDSNKENFLSTTKVNNNSPTTIQLTQI.

2 RRM domains span residues 19–102 (IYVG…KLTI) and 222–292 (HFKQ…PTTP). The span at 333 to 348 (QWGSVSTTGVSNQQNH) shows a compositional bias: polar residues. A disordered region spans residues 333–357 (QWGSVSTTGVSNQQNHPAAWNPDNK). The RRM 3 domain maps to 401–474 (EDLFSPFGSI…DRIRRLQAFF (74 aa)). Over residues 502–524 (TIRKPIESSTNKISENPTTLSSK) the composition is skewed to polar residues. The tract at residues 502 to 544 (TIRKPIESSTNKISENPTTLSSKVENKNEPKTGENKEPSQTNE) is disordered. Basic and acidic residues predominate over residues 525-538 (VENKNEPKTGENKE).

It is found in the cytoplasm. Its subcellular location is the nucleus. Its function is as follows. Binds the poly(A) tail of mRNA. Involved in the export of mRNA from the nucleus to the cytoplasm. The chain is mRNA export factor crp79 (crp79) from Schizosaccharomyces pombe (strain 972 / ATCC 24843) (Fission yeast).